The primary structure comprises 199 residues: Photosystem I reaction center subunit XI (199 aa).

A run of 2 helical transmembrane segments spans residues 108–128 (ITAGLLAAIGAVHIMTALLVL) and 165–185 (FWLGGCGGAVFAWLLVGTLHL).

It belongs to the PsaL family.

The protein localises to the cellular thylakoid membrane. The polypeptide is Photosystem I reaction center subunit XI (Prochlorococcus marinus (strain MIT 9515)).